Consider the following 255-residue polypeptide: Putative glycyl-radical enzyme activating enzyme MJ1632 (255 aa).

Residues 30 to 245 (SHISLSDKIT…SNVSCSLDFK (216 aa)) form the Radical SAM core domain. Positions 45, 49, and 52 each coordinate [4Fe-4S] cluster. Residues 51 to 53 (YCF), Gly-88, and 134 to 136 (DLK) contribute to the S-adenosyl-L-methionine site.

The protein belongs to the organic radical-activating enzymes family. Requires [4Fe-4S] cluster as cofactor.

It carries out the reaction glycyl-[protein] + reduced [flavodoxin] + S-adenosyl-L-methionine = glycin-2-yl radical-[protein] + semiquinone [flavodoxin] + 5'-deoxyadenosine + L-methionine + H(+). The chain is Putative glycyl-radical enzyme activating enzyme MJ1632 from Methanocaldococcus jannaschii (strain ATCC 43067 / DSM 2661 / JAL-1 / JCM 10045 / NBRC 100440) (Methanococcus jannaschii).